The chain runs to 2131 residues: Protein Ycf2 (2131 aa).

1484 to 1491 (GSIGTGRS) lines the ATP pocket.

This sequence belongs to the Ycf2 family.

It is found in the plastid. Its subcellular location is the chloroplast stroma. Functionally, probable ATPase of unknown function. Its presence in a non-photosynthetic plant (Epifagus virginiana) and experiments in tobacco indicate that it has an essential function which is probably not related to photosynthesis. The sequence is that of Protein Ycf2 (ycf2-A) from Spinacia oleracea (Spinach).